The sequence spans 445 residues: POU domain, class 5, transcription factor 1.2 (445 aa).

2 stretches are compositionally biased toward polar residues: residues 76-88 and 164-182; these read SANQ…QGNP and IFTS…SLDN. Disordered regions lie at residues 76–116 and 139–227; these read SANQ…PSLP and TTVV…GEME. A compositionally biased stretch (low complexity) spans 183 to 200; it reads SRCSSATSSSSGGTNVGT. Positions 218–292 constitute a POU-specific domain; it reads EEAPNSGEME…LLRSWLHEVE (75 aa). The segment at residues 312–371 is a DNA-binding region (homeobox); the sequence is KRKHRTSIENNVKCTLENYFMQCSKPSAQEIAQIARELNMEKDVVRVWFCNRRQKGKRQV.

It belongs to the POU transcription factor family. Class-5 subfamily. As to quaternary structure, interacts with the transcription factors tcf7l1/tcf3 and vegt. Initially (stage 9) expressed in all regions of the embryo, becoming localized to the ventroposterior regions by early neurula stages. In adults, expressed at a low level in the brain.

The protein resides in the nucleus. Transcription factor that binds to the octamer motif (5'-ATTTGCAT-3'). Antagonizes the activity of nodal/activin signaling during gastrulation to suppress mesendoderm formation. This chain is POU domain, class 5, transcription factor 1.2 (pou5f1.2), found in Xenopus laevis (African clawed frog).